The following is a 459-amino-acid chain: MHNIHRRNFLKAAGAATAGLVTANIALNAYASSVAPKPQAGKSVIGLIAPKMDVVRVGFIGVGERGFSHVEQFCHLEGVELKAICDTHQAVLDRAVDHIVKQNRPKPAVYTGNDLSYRDLLSRDDIDIVIISTPWEWHAPMAIETMESGKHAFVEVPMALTVEECWQVVDTAERTQKNCMMMENVNYGREELMVLNMVRQGVFGELLHGEAAYIHELRWQMKEIDHKTGSWRTYWHTKRNGNLYPTHGLGPVSQYMNINRGDRFDYLTSMSSPALGRALYAKREFPADHERNQLKYINGDINTSLIKTVKGRTIMVQHDTTTPRPYSRHNLIQGTNGVFAGFPNRIAVENGGFGQSYHEWDMDMQKWYDKYDHPLWQRIGKEAEINGGHGGMDFVMLWRMIYCLRNGEALDQDVYDGASWSVVNILSEHSLNDRSNSVTFPDFTRGAWQTAKPLGIVGA.

The segment at residues 1–31 (MHNIHRRNFLKAAGAATAGLVTANIALNAYA) is a signal peptide (tat-type signal). Residues 64–65 (ER), Asp-86, 135–138 (WEWH), 155–156 (EV), and Asn-184 contribute to the NAD(+) site. Substrate-binding positions include Tyr-213, Arg-232, 244–247 (YPTH), and Tyr-326. Tyr-244 provides a ligand contact to NAD(+).

This sequence belongs to the Gfo/Idh/MocA family. Glycosyl hydrolase 109 subfamily. NAD(+) is required as a cofactor. In terms of processing, predicted to be exported by the Tat system. The position of the signal peptide cleavage has not been experimentally proven.

Its function is as follows. Glycosidase. The polypeptide is Glycosyl hydrolase family 109 protein (Shewanella baltica (strain OS155 / ATCC BAA-1091)).